The primary structure comprises 317 residues: Melanocyte-stimulating hormone receptor (317 aa).

The Extracellular portion of the chain corresponds to 1 to 37 (MPVQGSQRRLLGSLNSTPTATPHLGLAANQTGARCLE). An N-linked (GlcNAc...) asparagine glycan is attached at Asn-29. Residues 38–63 (VSIPDGLFLSLGLVSLVENVLVVTAI) form a helical membrane-spanning segment. At 64–72 (AKNRNLHSP) the chain is on the cytoplasmic side. Residues 73–93 (MYCFICCLALSDLLVSGSNML) traverse the membrane as a helical segment. Over 94-118 (ETAVTLLLEAGALAARAAVVQQLDN) the chain is Extracellular. A helical transmembrane segment spans residues 119–140 (VIDVITCSSMLSSLCFLGAIAV). At 141 to 163 (DRYISIFYALRYHSIVTLPRARR) the chain is on the cytoplasmic side. A helical transmembrane segment spans residues 164-183 (AVAAIWVASVLFSMLFIAYY). The Extracellular portion of the chain corresponds to 184–191 (DHAAVLLC). Residues 192-211 (LVVFFLAMLVLMAVLYVHML) traverse the membrane as a helical segment. The Cytoplasmic segment spans residues 212–240 (ARACQHAQGIARLHKRQRPAHQGFGLKGA). A helical transmembrane segment spans residues 241–266 (ATLTILLGIFFLCWGPFFLHLTLIVL). At 267-279 (CPQHPTCSCIFKN) the chain is on the extracellular side. A helical membrane pass occupies residues 280-300 (FNLFLALIICNAIIDPLIYAF). Over 301–317 (RSQELRRTLKEVLLCSW) the chain is Cytoplasmic. Cys-315 carries S-palmitoyl cysteine lipidation.

Belongs to the G-protein coupled receptor 1 family. In terms of assembly, interacts with MGRN1, but does not undergo MGRN1-mediated ubiquitination; this interaction competes with GNAS-binding and thus inhibits agonist-induced cAMP production. Interacts with OPN3; the interaction results in a decrease in MC1R-mediated cAMP signaling and ultimately a decrease in melanin production in melanocytes.

The protein localises to the cell membrane. In terms of biological role, receptor for MSH (alpha, beta and gamma) and ACTH. The activity of this receptor is mediated by G proteins which activate adenylate cyclase. Mediates melanogenesis, the production of eumelanin (black/brown) and phaeomelanin (red/yellow), via regulation of cAMP signaling in melanocytes. The polypeptide is Melanocyte-stimulating hormone receptor (MC1R) (Miopithecus talapoin (Angolan talapoin)).